The chain runs to 131 residues: Snaclec alboaggregin-A subunit alpha (131 aa).

A C-type lectin domain is found at 1 to 131 (DCPSDWSSYD…EYPFVCKFXR (131 aa)). 3 cysteine pairs are disulfide-bonded: cysteine 2/cysteine 13, cysteine 30/cysteine 127, and cysteine 102/cysteine 119.

This sequence belongs to the snaclec family. Heterotetramer of the subunits alpha, alpha', beta and beta'; disulfide-linked. As to expression, expressed by the venom gland.

It is found in the secreted. Functionally, potent platelet activator that aggregates platelets via both GPIbalpha (GP1BA) and GPVI (GP6). Induces a tyrosine phosphorylation profile in platelets that resembles this produced by collagen, involving the time dependent tyrosine phosphorylation of Fc receptor gamma chain (FCGR1A), phospholipase Cgamma2 (PLCG2), and LAT. The chain is Snaclec alboaggregin-A subunit alpha from Trimeresurus albolabris (White-lipped pit viper).